A 214-amino-acid polypeptide reads, in one-letter code: Small ribosomal subunit protein uS3c (214 aa).

Residues 39 to 111 (IRTYLNKLAK…QLTINIIEVE (73 aa)) enclose the KH type-2 domain.

This sequence belongs to the universal ribosomal protein uS3 family. Part of the 30S ribosomal subunit.

The protein localises to the plastid. Its subcellular location is the chloroplast. The sequence is that of Small ribosomal subunit protein uS3c (rps3) from Trieres chinensis (Marine centric diatom).